We begin with the raw amino-acid sequence, 227 residues long: Cytochrome c oxidase subunit 2 (227 aa).

Residues 1-14 (MAYPMQLGLQDATS) lie on the Mitochondrial intermembrane side of the membrane. The helical transmembrane segment at 15–45 (PIMEELTDFHDHTLMIVFLISTLVLYIISLM) threads the bilayer. At 46–59 (LTTKLTHTNTMDAQ) the chain is on the mitochondrial matrix side. Residues 60 to 87 (EVETVWTILPAIILIMIALPSLRILYMM) traverse the membrane as a helical segment. Over 88 to 227 (DEINDPYLTV…QFESWTSSMT (140 aa)) the chain is Mitochondrial intermembrane. Cu cation contacts are provided by His-161, Cys-196, Glu-198, Cys-200, His-204, and Met-207. Glu-198 is a binding site for Mg(2+).

The protein belongs to the cytochrome c oxidase subunit 2 family. As to quaternary structure, component of the cytochrome c oxidase (complex IV, CIV), a multisubunit enzyme composed of 14 subunits. The complex is composed of a catalytic core of 3 subunits MT-CO1, MT-CO2 and MT-CO3, encoded in the mitochondrial DNA, and 11 supernumerary subunits COX4I, COX5A, COX5B, COX6A, COX6B, COX6C, COX7A, COX7B, COX7C, COX8 and NDUFA4, which are encoded in the nuclear genome. The complex exists as a monomer or a dimer and forms supercomplexes (SCs) in the inner mitochondrial membrane with NADH-ubiquinone oxidoreductase (complex I, CI) and ubiquinol-cytochrome c oxidoreductase (cytochrome b-c1 complex, complex III, CIII), resulting in different assemblies (supercomplex SCI(1)III(2)IV(1) and megacomplex MCI(2)III(2)IV(2)). Found in a complex with TMEM177, COA6, COX18, COX20, SCO1 and SCO2. Interacts with TMEM177 in a COX20-dependent manner. Interacts with COX20. Interacts with COX16. It depends on Cu cation as a cofactor.

The protein localises to the mitochondrion inner membrane. It catalyses the reaction 4 Fe(II)-[cytochrome c] + O2 + 8 H(+)(in) = 4 Fe(III)-[cytochrome c] + 2 H2O + 4 H(+)(out). Functionally, component of the cytochrome c oxidase, the last enzyme in the mitochondrial electron transport chain which drives oxidative phosphorylation. The respiratory chain contains 3 multisubunit complexes succinate dehydrogenase (complex II, CII), ubiquinol-cytochrome c oxidoreductase (cytochrome b-c1 complex, complex III, CIII) and cytochrome c oxidase (complex IV, CIV), that cooperate to transfer electrons derived from NADH and succinate to molecular oxygen, creating an electrochemical gradient over the inner membrane that drives transmembrane transport and the ATP synthase. Cytochrome c oxidase is the component of the respiratory chain that catalyzes the reduction of oxygen to water. Electrons originating from reduced cytochrome c in the intermembrane space (IMS) are transferred via the dinuclear copper A center (CU(A)) of subunit 2 and heme A of subunit 1 to the active site in subunit 1, a binuclear center (BNC) formed by heme A3 and copper B (CU(B)). The BNC reduces molecular oxygen to 2 water molecules using 4 electrons from cytochrome c in the IMS and 4 protons from the mitochondrial matrix. This chain is Cytochrome c oxidase subunit 2 (MT-CO2), found in Cratogeomys castanops (Yellow-faced pocket gopher).